The chain runs to 3375 residues: Basement membrane proteoglycan (3375 aa).

The signal sequence occupies residues 1–22 (MKRSSTVLAALLALLLVATNDA). Positions 45-130 (VQITVFPSEK…NTVEARATLS (86 aa)) constitute an Ig-like C2-type 1 domain. 11 disulfides stabilise this stretch: cysteine 66–cysteine 114, cysteine 149–cysteine 161, cysteine 156–cysteine 174, cysteine 168–cysteine 183, cysteine 190–cysteine 202, cysteine 197–cysteine 215, cysteine 209–cysteine 224, cysteine 233–cysteine 246, cysteine 240–cysteine 259, cysteine 253–cysteine 268, and cysteine 293–cysteine 344. LDL-receptor class A domains lie at 148–184 (QCMA…ANCP), 189–225 (TCEP…LNCN), and 232–269 (DCKP…VGCV). The Ig-like C2-type 2 domain maps to 271–355 (PTVVDPPQTN…AINVKGRVLA (85 aa)). A disordered region spans residues 364–385 (VDDPRPQPPQPPTAPPQRASCD). The span at 369–378 (PQPPQPPTAP) shows a compositional bias: pro residues. 3 disulfide bridges follow: cysteine 384–cysteine 400, cysteine 402–cysteine 411, and cysteine 414–cysteine 429. A Laminin EGF-like 1; truncated domain is found at 384–431 (CDTRGAVTPYPNNYGTCECKSQVTGPNCDQCKPGAFHLSEKSPEGCLK). The Laminin EGF-like 2; first part domain maps to 432–441 (CFCFGVSNDC). Residues 450–633 (KDRLMFAGDA…PDGLALEVEQ (184 aa)) enclose the Laminin IV type A 1 domain. Disulfide bonds link cysteine 634/cysteine 648, cysteine 636/cysteine 689, cysteine 691/cysteine 700, and cysteine 703/cysteine 718. Residues 634–666 (CVCPPGYLGTSCEDCAPGYERSGYGPYLGTCVP) form the Laminin EGF-like 2; second part domain. The Laminin EGF-like 3; truncated domain occupies 674–720 (CGPGAVAPTAPAQGQCQCKASVIGPNCDRCAPNSFGLAPTNPQGCIP). The Laminin EGF-like 4; first part domain occupies 721–730 (CFCSGVTQQC). Positions 740 to 921 (VSIDYARGDR…QGLTAAEVEQ (182 aa)) constitute a Laminin IV type A 2 domain. Residues 922-954 (CICPPGYVGTSCEDCAPGYSRTGGGLYLGLCEK) enclose the Laminin EGF-like 4; second part domain. Intrachain disulfides connect cysteine 955–cysteine 964, cysteine 957–cysteine 971, cysteine 974–cysteine 983, cysteine 986–cysteine 1002, cysteine 1011–cysteine 1021, cysteine 1013–cysteine 1027, cysteine 1030–cysteine 1039, cysteine 1042–cysteine 1058, cysteine 1061–cysteine 1069, cysteine 1063–cysteine 1079, cysteine 1082–cysteine 1091, cysteine 1094–cysteine 1109, cysteine 1152–cysteine 1200, cysteine 1247–cysteine 1294, and cysteine 1338–cysteine 1384. 3 Laminin EGF-like domains span residues 955–1004 (CECN…DCQP), 1011–1060 (CHCN…DCTP), and 1061–1111 (CPCP…VCEP). Ig-like C2-type domains are found at residues 1126-1222 (PHEV…KRIS), 1226-1311 (PQPV…AVLE), 1319-1401 (PKVD…EPVQ), 1410-1499 (PQRG…ARLN), 1503-1585 (PQAI…RPVE), 1588-1680 (PARV…TPAT), 1690-1785 (PQVE…STLN), 1793-1878 (PRPV…VRLE), 1886-1970 (PTAV…GNVN), 1973-2069 (PSLT…IYIE), 2073-2163 (PSRI…AVHV), 2173-2260 (PKVE…TAVS), 2263-2343 (QQDK…GFVT), 2349-2435 (PDTI…RTVL), and 2446-2530 (TFTV…VDLQ). Over residues 1388 to 1400 (DPSDNTPLQSEPV) the composition is skewed to polar residues. 2 disordered regions span residues 1388–1426 (DPSD…QTVN) and 1478–1497 (EYEC…PPAR). N-linked (GlcNAc...) asparagine glycosylation occurs at asparagine 1422. 4 cysteine pairs are disulfide-bonded: cysteine 1435-cysteine 1481, cysteine 1527-cysteine 1573, cysteine 1618-cysteine 1663, and cysteine 1719-cysteine 1767. Over residues 1481-1497 (CTSTEPDGSTQLSPPAR) the composition is skewed to polar residues. The tract at residues 1773-1792 (NSPPVKTNPSTLNVTPEGTP) is disordered. Positions 1776–1788 (PVKTNPSTLNVTP) are enriched in polar residues. 15 disulfides stabilise this stretch: cysteine 1814/cysteine 1861, cysteine 1907/cysteine 1954, cysteine 1998/cysteine 2053, cysteine 2099/cysteine 2147, cysteine 2195/cysteine 2242, cysteine 2284/cysteine 2329, cysteine 2374/cysteine 2420, cysteine 2467/cysteine 2514, cysteine 2713/cysteine 2725, cysteine 2719/cysteine 2736, cysteine 2738/cysteine 2747, cysteine 2754/cysteine 2764, cysteine 2759/cysteine 2773, cysteine 2775/cysteine 2784, and cysteine 2935/cysteine 2960. Positions 1880–1918 (TEDQEPPTAVVEPRTWNGKPGERHQFRCITTGSPTPKIT) are disordered. Residues 1907-1918 (CITTGSPTPKIT) are compositionally biased toward polar residues. Asparagine 2476 is a glycosylation site (N-linked (GlcNAc...) asparagine). A Laminin G-like 1 domain is found at 2532–2713 (DDFIPVIDGE…PSSVVKYDAC (182 aa)). The region spanning 2793 to 2960 (PLGFTSDTSF…LSSSGDISSC (168 aa)) is the Laminin G-like 2 domain. N-linked (GlcNAc...) asparagine glycosylation occurs at asparagine 2950. Over residues 2952–2963 (SSSGDISSCEES) the composition is skewed to low complexity. Residues 2952–3124 (SSSGDISSCE…GTLPPDSSSE (173 aa)) form a disordered region. 2 stretches are compositionally biased toward acidic residues: residues 2979-2990 (EEPEAVIEEPTT) and 2999-3010 (PITEEPTEEPTT). Residues 3011–3033 (TEEPTTTEEPTTTTEEPTTTTTE) are compositionally biased toward low complexity. Positions 3034 to 3044 (EPYHIYETSRD) are enriched in basic and acidic residues. The span at 3049–3079 (IIIPVETTTTSTTTTSTTEEPEAEPALVLPT) shows a compositional bias: low complexity. Residues 3081–3094 (PVEENDVSDEEEEI) show a composition bias toward acidic residues. Cystine bridges form between cysteine 3141-cysteine 3152, cysteine 3146-cysteine 3162, cysteine 3164-cysteine 3173, and cysteine 3333-cysteine 3359. N-linked (GlcNAc...) asparagine glycans are attached at residues asparagine 3143 and asparagine 3156. In terms of domain architecture, Laminin G-like 3 spans 3180–3359 (EHAARFDGDA…AIDGKNVKPC (180 aa)).

In terms of assembly, component of an integrin containing attachment complex, composed of at least pat-2, pat-3, pat-4, pat-6, unc-52, unc-97 and unc-112. As to expression, detected on embryonic and adult body wall muscle cells (at protein level). Found in the basement membrane of all contractile tissues (at protein level). Expressed in gonadal sheath cells and spermatheca.

The protein resides in the secreted. It is found in the extracellular space. Its subcellular location is the extracellular matrix. It localises to the basement membrane. The protein localises to the cytoplasm. The protein resides in the myofibril. It is found in the sarcomere. Its subcellular location is the m line. In terms of biological role, component of an integrin containing attachment complex, which is required for muscle development and maintenance. Probable structural role in myofilament assembly and/or attachment of the myofilament lattice to the cell membrane. May be an extracellular anchor for integrin receptors in body wall muscles and myoepithelial sheath cells. During the formation of neuromuscular junctions at the larval stage, negatively regulates membrane protrusion from body wall muscles, probably downstream of the integrin complex formed by pat-2 and pat-3. Involved in ovulation. Required for normal lifespan. This chain is Basement membrane proteoglycan, found in Caenorhabditis elegans.